The primary structure comprises 425 residues: Melibiose permease (425 aa).

Over 1–13 the chain is Cytoplasmic; it reads MNTTTCTHKDNPN. Residues 14–34 traverse the membrane as a helical segment; sequence FWIFGLFFFLYFFIMATCFPF. The Periplasmic segment spans residues 35–50; that stretch reads LPIWLSDIIGLNKTHT. Residues 51-71 form a helical membrane-spanning segment; sequence GIVFSCISLSAIAFQPVLGVI. Residues 72-80 lie on the Cytoplasmic side of the membrane; that stretch reads SDKLGLKKH. A helical transmembrane segment spans residues 81–101; it reads LLWIISVLLFLFAPFFLYVFA. Residues 102–107 lie on the Periplasmic side of the membrane; it reads PLLKTN. The chain crosses the membrane as a helical span at residues 108–128; it reads IWLGALSGGLYIGFVFSAGSG. The Cytoplasmic segment spans residues 129-149; that stretch reads AIEAYIERVSRNSAFEYGKAR. The chain crosses the membrane as a helical span at residues 150 to 170; the sequence is MFGCLGWGLCASTGGILFGID. Position 171 (P171) is a topological domain, periplasmic. Residues 172–192 form a helical membrane-spanning segment; it reads SYVFWMGSAAALLLMLLLVVA. Residues 193-227 lie on the Cytoplasmic side of the membrane; the sequence is KPKPNQTAQVMNALGANQPQITAKKVFNLFRQRRM. The helical transmembrane segment at 228-248 threads the bilayer; sequence WMFILYVIGVACVYDVFDQQF. Topologically, residues 249 to 267 are periplasmic; it reads ATFFKTFFATPQEGTRAFG. Residues 268–288 form a helical membrane-spanning segment; that stretch reads FATTAGEICNAIIMFCSPWII. The Cytoplasmic segment spans residues 289 to 297; the sequence is NRIGAKNTL. Residues 298-318 form a helical membrane-spanning segment; the sequence is LIAGLIMATRIIGSSFATTAV. Over 319-325 the chain is Periplasmic; sequence EVIALKM. A helical membrane pass occupies residues 326–346; sequence LHALEVPFLLVGAFKYITGVF. The Cytoplasmic segment spans residues 347-353; the sequence is DTRLSAT. A helical membrane pass occupies residues 354-374; it reads IYLIGFQFAKQSAAIFLSAFA. The Periplasmic segment spans residues 375 to 385; that stretch reads GNMYDRIGFQE. The helical transmembrane segment at 386-406 threads the bilayer; the sequence is TYLMLGCFVLAITVVSAFTLS. Residues 407–425 lie on the Cytoplasmic side of the membrane; the sequence is SRQEIAAAAGAAALTSQSR.

It belongs to the major facilitator superfamily. Oligosaccharide:H(+) symporter (OHS) (TC 2.A.1.5) family.

It is found in the cell inner membrane. Functionally, responsible for transport of melibiose into the cell, with the concomitant import of a proton (symport system). Can also transport lactose, and has weak activity with maltose. Cannot transport the analog methyl-1-thio-beta,D-galactopyranoside (TMG). The protein is Melibiose permease of Enterobacter cloacae subsp. cloacae (strain ATCC 13047 / DSM 30054 / NBRC 13535 / NCTC 10005 / WDCM 00083 / NCDC 279-56).